A 120-amino-acid chain; its full sequence is Glycine cleavage system H protein (120 aa).

Positions 17–99 (VATVGITNYA…QGAGWFFKLK (83 aa)) constitute a Lipoyl-binding domain. Lys58 carries the post-translational modification N6-lipoyllysine.

Belongs to the GcvH family. In terms of assembly, the glycine cleavage system is composed of four proteins: P, T, L and H. (R)-lipoate is required as a cofactor.

Functionally, the glycine cleavage system catalyzes the degradation of glycine. The H protein shuttles the methylamine group of glycine from the P protein to the T protein. This is Glycine cleavage system H protein from Rhizobium leguminosarum bv. trifolii (strain WSM2304).